Reading from the N-terminus, the 308-residue chain is Membrane protein insertase YidC 1 (308 aa).

Residues 1 to 22 form the signal peptide; sequence MKSIKRFALSAMGAAMLLVLTG. A lipid anchor (N-palmitoyl cysteine) is attached at cysteine 23. Residue cysteine 23 is the site of S-diacylglycerol cysteine attachment. The next 5 helical transmembrane spans lie at 60–80, 135–155, 168–188, 211–225, and 230–252; these read FGVAIIIVTIIVRLIILPLGI, FGGVGCFPILLQMPFFSAIYF, YLGIPLGSPSMILVACAGVLY, MIYMSPLMIVVFSLF, and VTLYWVVGGFMMILQQFIVNYIV. The disordered stretch occupies residues 263-308; it reads ELAKNPSKASAFSTPSGRKDVTPEQPTAITSKKKHKNRNAGKQRSR. A compositionally biased stretch (polar residues) spans 269–278; it reads SKASAFSTPS. Residues 293–308 show a composition bias toward basic residues; the sequence is SKKKHKNRNAGKQRSR.

This sequence belongs to the OXA1/ALB3/YidC family. Type 2 subfamily.

The protein localises to the cell membrane. In terms of biological role, required for the insertion and/or proper folding and/or complex formation of integral membrane proteins into the membrane. Involved in integration of membrane proteins that insert both dependently and independently of the Sec translocase complex, as well as at least some lipoproteins. The protein is Membrane protein insertase YidC 1 of Streptococcus pneumoniae (strain ATCC BAA-255 / R6).